A 484-amino-acid polypeptide reads, in one-letter code: Catalase (484 aa).

Position 53 is a methionine sulfone (M53). Active-site residues include H54 and N127. Residue Y337 coordinates heme.

As to quaternary structure, homotetramer. The cofactor is heme. It depends on NADP(+) as a cofactor.

Its subcellular location is the cytoplasm. The catalysed reaction is 2 H2O2 = O2 + 2 H2O. Its function is as follows. Decomposes hydrogen peroxide into water and oxygen; serves to protect cells from the toxic effects of hydrogen peroxide. In Proteus mirabilis, this protein is Catalase (katA).